The primary structure comprises 271 residues: 4-hydroxy-tetrahydrodipicolinate reductase (271 aa).

NAD(+)-binding positions include 10 to 15 (GAGGRM), Glu-36, 100 to 102 (GTT), and 124 to 127 (SGNM). The active-site Proton donor/acceptor is the His-157. His-158 lines the (S)-2,3,4,5-tetrahydrodipicolinate pocket. Residue Lys-161 is the Proton donor of the active site. (S)-2,3,4,5-tetrahydrodipicolinate is bound at residue 167–168 (GT).

It belongs to the DapB family.

It localises to the cytoplasm. It carries out the reaction (S)-2,3,4,5-tetrahydrodipicolinate + NAD(+) + H2O = (2S,4S)-4-hydroxy-2,3,4,5-tetrahydrodipicolinate + NADH + H(+). The enzyme catalyses (S)-2,3,4,5-tetrahydrodipicolinate + NADP(+) + H2O = (2S,4S)-4-hydroxy-2,3,4,5-tetrahydrodipicolinate + NADPH + H(+). It participates in amino-acid biosynthesis; L-lysine biosynthesis via DAP pathway; (S)-tetrahydrodipicolinate from L-aspartate: step 4/4. Its function is as follows. Catalyzes the conversion of 4-hydroxy-tetrahydrodipicolinate (HTPA) to tetrahydrodipicolinate. The sequence is that of 4-hydroxy-tetrahydrodipicolinate reductase from Bradyrhizobium diazoefficiens (strain JCM 10833 / BCRC 13528 / IAM 13628 / NBRC 14792 / USDA 110).